Here is a 70-residue protein sequence, read N- to C-terminus: ATP synthase subunit c (70 aa).

2 consecutive transmembrane segments (helical) span residues 3–23 (FIAA…GNGM) and 47–67 (FIGV…AFML).

It belongs to the ATPase C chain family. In terms of assembly, F-type ATPases have 2 components, F(1) - the catalytic core - and F(0) - the membrane proton channel. F(1) has five subunits: alpha(3), beta(3), gamma(1), delta(1), epsilon(1). F(0) has three main subunits: a(1), b(2) and c(10-14). The alpha and beta chains form an alternating ring which encloses part of the gamma chain. F(1) is attached to F(0) by a central stalk formed by the gamma and epsilon chains, while a peripheral stalk is formed by the delta and b chains.

It localises to the cell membrane. In terms of biological role, f(1)F(0) ATP synthase produces ATP from ADP in the presence of a proton or sodium gradient. F-type ATPases consist of two structural domains, F(1) containing the extramembraneous catalytic core and F(0) containing the membrane proton channel, linked together by a central stalk and a peripheral stalk. During catalysis, ATP synthesis in the catalytic domain of F(1) is coupled via a rotary mechanism of the central stalk subunits to proton translocation. Functionally, key component of the F(0) channel; it plays a direct role in translocation across the membrane. A homomeric c-ring of between 10-14 subunits forms the central stalk rotor element with the F(1) delta and epsilon subunits. In Lacticaseibacillus casei (strain BL23) (Lactobacillus casei), this protein is ATP synthase subunit c.